A 258-amino-acid polypeptide reads, in one-letter code: Large ribosomal subunit protein uL2x (258 aa).

The segment at 211–231 (HGGGNHQHIGHASTVRRDAPP) is disordered.

The protein belongs to the universal ribosomal protein uL2 family.

This is Large ribosomal subunit protein uL2x (RPL8C) from Arabidopsis thaliana (Mouse-ear cress).